The chain runs to 103 residues: Insulin (103 aa).

Residues 1-20 form the signal peptide; that stretch reads IQSLPLLALLALSGPGTSHA. Disulfide bonds link cysteine 27–cysteine 89, cysteine 39–cysteine 102, and cysteine 88–cysteine 93. Residues 53 to 80 constitute a propeptide, c peptide; that stretch reads DAEHPLVNGPLHGEVGDLPFQQEEFEKV.

Belongs to the insulin family. As to quaternary structure, heterodimer of a B chain and an A chain linked by two disulfide bonds.

It is found in the secreted. Its function is as follows. Insulin decreases blood glucose concentration. It increases cell permeability to monosaccharides, amino acids and fatty acids. It accelerates glycolysis, the pentose phosphate cycle, and glycogen synthesis in liver. The chain is Insulin (INS) from Selasphorus rufus (Rufous hummingbird).